The following is a 325-amino-acid chain: LIM and senescent cell antigen-like-containing domain protein 1 (325 aa).

Residue alanine 2 is modified to N-acetylalanine. 5 LIM zinc-binding domains span residues cysteine 10–aspartate 62, cysteine 71–cysteine 121, cysteine 135–cysteine 184, cysteine 193–histidine 243, and cysteine 252–cysteine 303.

Component of the heterotrimeric IPP (ILK-PINCH-PARVIN) complex composed of ILK, LIMS1/PINCH and PARVA; the complex binds to F-actin via the C-terminal tail of LIMS1 and the N-terminal region of PARVA, promoting F-actin filament bundling. Formation of the IPP complex is dependent on protein kinase C and precedes integrin-mediated cell adhesion and spreading. Competes with LIMS2 for interaction with ILK. Interacts with SH3/SH2 adapter NCK2, thereby linking the complex to cell surface receptors. Interacts (via LIM zinc-binding 5) with TGFB1I1.

Its subcellular location is the cell junction. The protein localises to the focal adhesion. It localises to the cell membrane. Functionally, within the IPP (ILK-PINCH-PARVIN) complex, binds to F-actin, promoting F-actin bundling, a process required to generate force for actin cytoskeleton reorganization and subsequent dynamic cell adhesion events such as cell spreading and migration. The protein is LIM and senescent cell antigen-like-containing domain protein 1 (Lims1) of Mus musculus (Mouse).